Consider the following 127-residue polypeptide: MASATILARVGDKQALGAHGEELAARFLRDAGMEIVARNWRCRYGELDLIARDAQTTAFVEVKTRRGLGFGTPAEAVTFTKRQRIRRLALLWLAEQDGPWQQIRFDVVSVLMTPGHRPVIDHLKAVF.

The protein belongs to the UPF0102 family.

The chain is UPF0102 protein NFA_41430 from Nocardia farcinica (strain IFM 10152).